Here is a 545-residue protein sequence, read N- to C-terminus: ATP synthase subunit alpha (545 aa).

Gly172 to Thr179 is a binding site for ATP.

This sequence belongs to the ATPase alpha/beta chains family. F-type ATPases have 2 components, CF(1) - the catalytic core - and CF(0) - the membrane proton channel. CF(1) has five subunits: alpha(3), beta(3), gamma(1), delta(1), epsilon(1). CF(0) has three main subunits: a(1), b(2) and c(9-12). The alpha and beta chains form an alternating ring which encloses part of the gamma chain. CF(1) is attached to CF(0) by a central stalk formed by the gamma and epsilon chains, while a peripheral stalk is formed by the delta and b chains.

It localises to the cell membrane. The catalysed reaction is ATP + H2O + 4 H(+)(in) = ADP + phosphate + 5 H(+)(out). In terms of biological role, produces ATP from ADP in the presence of a proton gradient across the membrane. The alpha chain is a regulatory subunit. This is ATP synthase subunit alpha from Nocardia farcinica (strain IFM 10152).